A 369-amino-acid polypeptide reads, in one-letter code: Small ribosomal subunit biogenesis GTPase RsgA (369 aa).

One can recognise a CP-type G domain in the interval G116–I271. GTP-binding positions include N161 to D164 and G213 to T221. Zn(2+) is bound by residues C294, C299, H301, and C307.

This sequence belongs to the TRAFAC class YlqF/YawG GTPase family. RsgA subfamily. In terms of assembly, monomer. Associates with 30S ribosomal subunit, binds 16S rRNA. Zn(2+) is required as a cofactor.

Its subcellular location is the cytoplasm. One of several proteins that assist in the late maturation steps of the functional core of the 30S ribosomal subunit. Helps release RbfA from mature subunits. May play a role in the assembly of ribosomal proteins into the subunit. Circularly permuted GTPase that catalyzes slow GTP hydrolysis, GTPase activity is stimulated by the 30S ribosomal subunit. The sequence is that of Small ribosomal subunit biogenesis GTPase RsgA from Methanosarcina acetivorans (strain ATCC 35395 / DSM 2834 / JCM 12185 / C2A).